A 109-amino-acid polypeptide reads, in one-letter code: Aquaporin-2 (109 aa).

The Cytoplasmic portion of the chain corresponds to Ser-1–Lys-6. A helical transmembrane segment spans residues Ala-7–Leu-27. Topologically, residues Asn-28–Ser-35 are extracellular. A helical membrane pass occupies residues Gly-36 to Leu-54. Topologically, residues Gly-55 to Gly-59 are cytoplasmic. Residues Ala-60 to Ala-69 constitute an intramembrane region (discontinuously helical). An NPA 1 motif is present at residues Asn-63 to Ala-65. Residues Cys-70–Arg-80 lie on the Cytoplasmic side of the membrane. A helical transmembrane segment spans residues Ala-81–Leu-102. The Extracellular segment spans residues Thr-103–Gly-109.

It belongs to the MIP/aquaporin (TC 1.A.8) family. As to quaternary structure, homotetramer. Post-translationally, serine phosphorylation is necessary and sufficient for expression at the apical membrane. Endocytosis is not phosphorylation-dependent. In terms of processing, N-glycosylated.

It is found in the apical cell membrane. It localises to the basolateral cell membrane. The protein resides in the cell membrane. Its subcellular location is the cytoplasmic vesicle membrane. The protein localises to the golgi apparatus. It is found in the trans-Golgi network membrane. The enzyme catalyses H2O(in) = H2O(out). It carries out the reaction glycerol(in) = glycerol(out). In terms of biological role, forms a water-specific channel that provides the plasma membranes of renal collecting duct with high permeability to water, thereby permitting water to move in the direction of an osmotic gradient. Plays an essential role in renal water homeostasis. Could also be permeable to glycerol. The polypeptide is Aquaporin-2 (Orycteropus afer (Aardvark)).